The sequence spans 263 residues: (2Z,6E)-farnesyl diphosphate synthase (263 aa).

The active site involves Asp-40. Asp-40 is a binding site for Mg(2+). Residues 41 to 44, Trp-45, and 86 to 88 each bind substrate; these read GNRR and STE. The Proton acceptor role is filled by Asn-89. Substrate-binding positions include Arg-92, Arg-212, and 218-220; that span reads RLS. Glu-231 is a Mg(2+) binding site.

Belongs to the UPP synthase family. Z-FPP synthase subfamily. As to quaternary structure, homodimer. The cofactor is Mg(2+).

The protein localises to the cell membrane. It catalyses the reaction isopentenyl diphosphate + (2E)-geranyl diphosphate = (2Z,6E)-farnesyl diphosphate + diphosphate. In terms of biological role, catalyzes the condensation of only one isopentenyl pyrophosphate (IPP) unit in the cis configuration to E-geranyl diphosphate (E-GPP) generating the 15 carbon product (2Z,6E)-farnesyl diphosphate (Z-FPP or EZ-FPP). Z-FPP is the precursor of decaprenyl diphosphate, which has a central role in the biosynthesis of the mycobacterial cell wall. This chain is (2Z,6E)-farnesyl diphosphate synthase (uppS), found in Mycolicibacterium smegmatis (strain ATCC 700084 / mc(2)155) (Mycobacterium smegmatis).